The chain runs to 298 residues: Mitochondrial dicarboxylate/tricarboxylate transporter DTC (298 aa).

Solcar repeat units lie at residues 12-93 (WTTV…LTAK), 103-194 (LPLY…SAEY), and 202-292 (GEMS…ITKF). 6 consecutive transmembrane segments (helical) span residues 18 to 38 (FVNG…IDMI), 68 to 88 (GLSA…GSFK), 109 to 129 (ALCG…ADLA), 169 to 189 (GCGP…ASYD), 208 to 228 (VGAS…FDFV), and 268 to 288 (FPVY…FLNQ).

The protein belongs to the mitochondrial carrier (TC 2.A.29) family. Highly expressed in flower buds and at lower levels in roots, leaves and stems.

It is found in the mitochondrion inner membrane. Its function is as follows. Catalyzes the transport of dicarboxylates, such as oxoglutarate, oxaloacetate, malate, and succinate, and of tricarboxylates, such as citrate, isocitrate, cis-aconitate, and trans-aconitate by a counter-exchange mechanism across the inner mitochondrial membrane. Substrate preference in reconstituted proteoliposomes is oxaloacetate &gt; malonate &gt; malate &gt; maleate &gt; succinate &gt; oxoglutarate &gt; citrate &gt; trans-aconitate &gt; cis-aconitate &gt; sulfate &gt; isocitrate. May be important for plant metabolic functions requiring organic acid flux to or from the mitochondria, such as nitrogen assimilation, export of reducing equivalents from the mitochondria, and fatty acid elongation. The polypeptide is Mitochondrial dicarboxylate/tricarboxylate transporter DTC (DTC) (Arabidopsis thaliana (Mouse-ear cress)).